The chain runs to 295 residues: Taste receptor type 2 member 120 (295 aa).

At 1 to 5 (MDLTE) the chain is on the extracellular side. A helical membrane pass occupies residues 6 to 26 (WIVTIIMMIEFLLGNCANFFI). The Cytoplasmic portion of the chain corresponds to 27–45 (MVVNAIDCMKRRKISSADR). A helical membrane pass occupies residues 46–66 (IITALAISRIGLLWAMLMNWH). The Extracellular portion of the chain corresponds to 67 to 83 (SRVYTTDTYSFQVTAFS). The helical transmembrane segment at 84–104 (GIIWAITNHFTTWLGTILSMF) threads the bilayer. Residues 105 to 125 (YLFKIANFSNCLFLHLKRKLD) lie on the Cytoplasmic side of the membrane. A helical membrane pass occupies residues 126–146 (SVLLVIFLVSSLLVFAYLGVV). The Extracellular segment spans residues 147-177 (NIKKIAWLSVHEGNVTVKSKLMNIASIRDTL). Asn160 carries an N-linked (GlcNAc...) asparagine glycan. The chain crosses the membrane as a helical span at residues 178–198 (LFSLINIAPFGISLTCVLLLI). Over 199-230 (YSLGKHLKNMKFYGKGCQDQSTMVHIRALQTV) the chain is Cytoplasmic. The helical transmembrane segment at 231–251 (VSFLLLYATYSSCVIISGWSI) threads the bilayer. Residues 252-255 (QNVP) lie on the Extracellular side of the membrane. Residues 256 to 276 (IFLFCVTIGAFYPAGHSCILI) traverse the membrane as a helical segment. Residues 277-295 (WGNQKLKQFLLLFLRQMKC) lie on the Cytoplasmic side of the membrane.

It belongs to the G-protein coupled receptor T2R family.

The protein localises to the membrane. Putative taste receptor which may play a role in the perception of bitterness. The chain is Taste receptor type 2 member 120 from Rattus norvegicus (Rat).